The primary structure comprises 140 residues: Nucleoside diphosphate kinase (140 aa).

Positions 11, 59, 87, 93, 104, and 114 each coordinate ATP. H117 serves as the catalytic Pros-phosphohistidine intermediate.

This sequence belongs to the NDK family. Homotetramer. Requires Mg(2+) as cofactor.

It localises to the cytoplasm. It catalyses the reaction a 2'-deoxyribonucleoside 5'-diphosphate + ATP = a 2'-deoxyribonucleoside 5'-triphosphate + ADP. It carries out the reaction a ribonucleoside 5'-diphosphate + ATP = a ribonucleoside 5'-triphosphate + ADP. In terms of biological role, major role in the synthesis of nucleoside triphosphates other than ATP. The ATP gamma phosphate is transferred to the NDP beta phosphate via a ping-pong mechanism, using a phosphorylated active-site intermediate. The polypeptide is Nucleoside diphosphate kinase (Rhodospirillum rubrum (strain ATCC 11170 / ATH 1.1.1 / DSM 467 / LMG 4362 / NCIMB 8255 / S1)).